The primary structure comprises 331 residues: Low affinity immunoglobulin epsilon Fc receptor (331 aa).

The Cytoplasmic segment spans residues methionine 1–glycine 23. Residues cysteine 17 and cysteine 18 are each lipidated (S-palmitoyl cysteine). Residues threonine 24–tryptophan 49 form a helical; Signal-anchor for type II membrane protein membrane-spanning segment. At glutamate 50–proline 331 the chain is on the extracellular side. An N-linked (GlcNAc...) asparagine glycan is attached at asparagine 65. 3 consecutive repeats follow at residues lysine 71–serine 91, glutamine 92–serine 112, and glutamine 113–serine 133. Asparagine 114 carries an N-linked (GlcNAc...) asparagine glycan. Intrachain disulfides connect cysteine 183/cysteine 311, cysteine 186/cysteine 197, cysteine 214/cysteine 305, and cysteine 282/cysteine 296. The 114-residue stretch at isoleucine 185 to serine 298 folds into the C-type lectin domain. Ca(2+) contacts are provided by glutamate 272, asparagine 292, and aspartate 293. Serine 319 is a glycosylation site (O-linked (Xyl...) (chondroitin sulfate) serine).

Homotrimer. Interacts (via C-type lectin domain) with IGHE (via CH3 region); this interaction regulates IgE homeostasis. Interacts (via C-terminus) with CR2/CD21 (via Sushi domain 1 and 2). N- and O-glycosylated.

Its subcellular location is the cell membrane. It localises to the secreted. Low-affinity receptor for immunoglobulin E (IgE) and CR2/CD21. Has essential roles in the regulation of IgE production and in the differentiation of B cells. On B cells, initiates IgE-dependent antigen uptake and presentation to T cells. On macrophages, upon IgE binding and antigen cross-linking induces intracellular killing of parasites through activation of L-Arginine-nitric oxide pathway. In Mus musculus (Mouse), this protein is Low affinity immunoglobulin epsilon Fc receptor (Fcer2).